The following is a 399-amino-acid chain: Acetate kinase (399 aa).

Asparagine 10 is a binding site for Mg(2+). Residue lysine 17 participates in ATP binding. Substrate is bound at residue arginine 91. The active-site Proton donor/acceptor is the aspartate 148. ATP-binding positions include 208 to 212, 283 to 285, and 331 to 335; these read HLGNG, DCR, and GIGEN. Mg(2+) is bound at residue glutamate 385.

This sequence belongs to the acetokinase family. In terms of assembly, homodimer. The cofactor is Mg(2+). It depends on Mn(2+) as a cofactor.

It is found in the cytoplasm. It catalyses the reaction acetate + ATP = acetyl phosphate + ADP. It functions in the pathway metabolic intermediate biosynthesis; acetyl-CoA biosynthesis; acetyl-CoA from acetate: step 1/2. In terms of biological role, catalyzes the formation of acetyl phosphate from acetate and ATP. Can also catalyze the reverse reaction. The sequence is that of Acetate kinase from Shewanella sp. (strain MR-4).